A 231-amino-acid chain; its full sequence is Uridylate kinase (231 aa).

6 to 9 is a binding site for ATP; the sequence is KLSG. The tract at residues 14–19 is involved in allosteric activation by GTP; sequence GEGGRG. Gly49 and Arg53 together coordinate ATP. Residues Asp66 and 127-134 each bind UMP; that span reads TSNPFFTT. Positions 154, 160, and 163 each coordinate ATP.

It belongs to the UMP kinase family. In terms of assembly, homohexamer.

The protein localises to the cytoplasm. The catalysed reaction is UMP + ATP = UDP + ADP. It functions in the pathway pyrimidine metabolism; CTP biosynthesis via de novo pathway; UDP from UMP (UMPK route): step 1/1. With respect to regulation, allosterically activated by GTP. Inhibited by UTP. In terms of biological role, catalyzes the reversible phosphorylation of UMP to UDP. The polypeptide is Uridylate kinase (Thermotoga petrophila (strain ATCC BAA-488 / DSM 13995 / JCM 10881 / RKU-1)).